The sequence spans 425 residues: Enolase (425 aa).

Gln163 is a binding site for (2R)-2-phosphoglycerate. The active-site Proton donor is Glu205. Mg(2+)-binding residues include Asp242, Glu285, and Asp312. (2R)-2-phosphoglycerate-binding residues include Lys337, Arg366, Ser367, and Lys388. Lys337 (proton acceptor) is an active-site residue.

Belongs to the enolase family. Mg(2+) serves as cofactor.

Its subcellular location is the cytoplasm. The protein resides in the secreted. It localises to the cell surface. The enzyme catalyses (2R)-2-phosphoglycerate = phosphoenolpyruvate + H2O. It participates in carbohydrate degradation; glycolysis; pyruvate from D-glyceraldehyde 3-phosphate: step 4/5. Functionally, catalyzes the reversible conversion of 2-phosphoglycerate (2-PG) into phosphoenolpyruvate (PEP). It is essential for the degradation of carbohydrates via glycolysis. The polypeptide is Enolase (Rhodospirillum rubrum (strain ATCC 11170 / ATH 1.1.1 / DSM 467 / LMG 4362 / NCIMB 8255 / S1)).